The chain runs to 245 residues: MRWSRGRGGGLLTWLKRLIVRSVLVVIGAWLAGILLFSFLPVPFSAVMVDRQVSAWLKGEFAYVAHSDWVAMDDIAPAMALAVMAAEDQKFPQHWGFDVDAIGQALKHNERNTQRVRGASTLSQQMVKNLFLWDGRSWVRKGLEAGITTGVELVWTKRRIITVYLNIAEFGPGVFGVEAAARRYFNKSASKLTASESALLAAVLPNPIRFRANAPSGYVIQRQQWILRQMRQMGGDAFLRDNNLN.

The chain crosses the membrane as a helical span at residues 24–44; that stretch reads LVVIGAWLAGILLFSFLPVPF.

The protein belongs to the glycosyltransferase 51 family.

It localises to the cell inner membrane. It carries out the reaction [GlcNAc-(1-&gt;4)-Mur2Ac(oyl-L-Ala-gamma-D-Glu-L-Lys-D-Ala-D-Ala)](n)-di-trans,octa-cis-undecaprenyl diphosphate + beta-D-GlcNAc-(1-&gt;4)-Mur2Ac(oyl-L-Ala-gamma-D-Glu-L-Lys-D-Ala-D-Ala)-di-trans,octa-cis-undecaprenyl diphosphate = [GlcNAc-(1-&gt;4)-Mur2Ac(oyl-L-Ala-gamma-D-Glu-L-Lys-D-Ala-D-Ala)](n+1)-di-trans,octa-cis-undecaprenyl diphosphate + di-trans,octa-cis-undecaprenyl diphosphate + H(+). It participates in cell wall biogenesis; peptidoglycan biosynthesis. Peptidoglycan polymerase that catalyzes glycan chain elongation from lipid-linked precursors. This Pectobacterium atrosepticum (strain SCRI 1043 / ATCC BAA-672) (Erwinia carotovora subsp. atroseptica) protein is Biosynthetic peptidoglycan transglycosylase.